The primary structure comprises 952 residues: Translation initiation factor IF-2 (952 aa).

Disordered regions lie at residues 74 to 95 (QRRLSRLEEQSRKTYEKERQLK), 153 to 204 (AAQA…KEEP), 230 to 256 (MHSPFDRSSEAERKKKNRKKNFKEQAD), and 273 to 319 (DEKG…DVND). Over residues 153–168 (AAQADQTDQTDQTDQA) the composition is skewed to low complexity. Over residues 232–242 (SPFDRSSEAER) the composition is skewed to basic and acidic residues. The span at 286-303 (PGETNAATPAGTASTAGA) shows a compositional bias: low complexity. One can recognise a tr-type G domain in the interval 449 to 619 (IRPPVITIMG…LAEAEIRELK (171 aa)). Residues 458–465 (GHVDHGKT) are G1. Residue 458–465 (GHVDHGKT) participates in GTP binding. The G2 stretch occupies residues 483–487 (GITQH). Positions 505–508 (DTPG) are G3. GTP-binding positions include 505-509 (DTPGH) and 559-562 (NKVD). The G4 stretch occupies residues 559–562 (NKVD). The segment at 595-597 (SAK) is G5.

This sequence belongs to the TRAFAC class translation factor GTPase superfamily. Classic translation factor GTPase family. IF-2 subfamily.

Its subcellular location is the cytoplasm. Its function is as follows. One of the essential components for the initiation of protein synthesis. Protects formylmethionyl-tRNA from spontaneous hydrolysis and promotes its binding to the 30S ribosomal subunits. Also involved in the hydrolysis of GTP during the formation of the 70S ribosomal complex. This Chlorobium limicola (strain DSM 245 / NBRC 103803 / 6330) protein is Translation initiation factor IF-2.